We begin with the raw amino-acid sequence, 31 residues long: Photosystem II reaction center protein T (31 aa).

A helical membrane pass occupies residues 3 to 23; sequence SAAYILVLALALGVIFFAIAF.

It belongs to the PsbT family. In terms of assembly, PSII is composed of 1 copy each of membrane proteins PsbA, PsbB, PsbC, PsbD, PsbE, PsbF, PsbH, PsbI, PsbJ, PsbK, PsbL, PsbM, PsbT, PsbX, PsbY, PsbZ, Psb30/Ycf12, peripheral proteins PsbO, CyanoQ (PsbQ), PsbU, PsbV and a large number of cofactors. It forms dimeric complexes.

It localises to the cellular thylakoid membrane. Found at the monomer-monomer interface of the photosystem II (PS II) dimer, plays a role in assembly and dimerization of PSII. PSII is a light-driven water plastoquinone oxidoreductase, using light energy to abstract electrons from H(2)O, generating a proton gradient subsequently used for ATP formation. This Trichodesmium erythraeum (strain IMS101) protein is Photosystem II reaction center protein T.